Consider the following 182-residue polypeptide: Troponin I, fast skeletal muscle (182 aa).

Gly2 is modified (N-acetylglycine). The segment at 2–48 (GDEEKRNRAITARRQHLKSVMLQIAATELEKEEGRREAEKQNYLAEH) is involved in binding TNC. Position 12 is a phosphothreonine; by PHK (Thr12). The segment at 97–117 (NQKLFDLRGKFKRPPLRRVRM) is involved in binding TNC and actin. Position 118 is a phosphoserine; by PKA (Ser118).

This sequence belongs to the troponin I family. In terms of assembly, binds to actin and tropomyosin.

In terms of biological role, troponin I is the inhibitory subunit of troponin, the thin filament regulatory complex which confers calcium-sensitivity to striated muscle actomyosin ATPase activity. This Oryctolagus cuniculus (Rabbit) protein is Troponin I, fast skeletal muscle (TNNI2).